The primary structure comprises 152 residues: Xanthine-guanine phosphoribosyltransferase (152 aa).

Residues 37–38 (RG), R69, and 88–96 (DDLVDTGGT) each bind 5-phospho-alpha-D-ribose 1-diphosphate. A GMP-binding site is contributed by R69. Position 89 (D89) interacts with Mg(2+). Residues D92 and I135 each contribute to the guanine site. Residues D92 and I135 each contribute to the xanthine site. GMP contacts are provided by residues 92 to 96 (DTGGT) and 134 to 135 (WI).

This sequence belongs to the purine/pyrimidine phosphoribosyltransferase family. XGPT subfamily. Homotetramer. It depends on Mg(2+) as a cofactor.

The protein resides in the cell inner membrane. It carries out the reaction GMP + diphosphate = guanine + 5-phospho-alpha-D-ribose 1-diphosphate. The catalysed reaction is XMP + diphosphate = xanthine + 5-phospho-alpha-D-ribose 1-diphosphate. It catalyses the reaction IMP + diphosphate = hypoxanthine + 5-phospho-alpha-D-ribose 1-diphosphate. It participates in purine metabolism; GMP biosynthesis via salvage pathway; GMP from guanine: step 1/1. Its pathway is purine metabolism; XMP biosynthesis via salvage pathway; XMP from xanthine: step 1/1. Purine salvage pathway enzyme that catalyzes the transfer of the ribosyl-5-phosphate group from 5-phospho-alpha-D-ribose 1-diphosphate (PRPP) to the N9 position of the 6-oxopurines guanine and xanthine to form the corresponding ribonucleotides GMP (guanosine 5'-monophosphate) and XMP (xanthosine 5'-monophosphate), with the release of PPi. To a lesser extent, also acts on hypoxanthine. In Enterobacter sp. (strain 638), this protein is Xanthine-guanine phosphoribosyltransferase.